Here is a 256-residue protein sequence, read N- to C-terminus: ATP synthase peripheral stalk subunit b, mitochondrial (256 aa).

The N-terminal 42 residues, 1-42 (MLSRVVLSAAATAAPCLKNAAVLGPGVLQATRVFHTGQPRLA), are a transit peptide targeting the mitochondrion. Position 131 is an N6-succinyllysine (Lys131). 6 positions are modified to N6-acetyllysine: Lys139, Lys154, Lys162, Lys221, Lys233, and Lys244.

This sequence belongs to the eukaryotic ATPase B chain family. In terms of assembly, component of the ATP synthase complex composed at least of ATP5F1A/subunit alpha, ATP5F1B/subunit beta, ATP5MC1/subunit c (homooctomer), MT-ATP6/subunit a, MT-ATP8/subunit 8, ATP5ME/subunit e, ATP5MF/subunit f, ATP5MG/subunit g, ATP5MK/subunit k, ATP5MJ/subunit j, ATP5F1C/subunit gamma, ATP5F1D/subunit delta, ATP5F1E/subunit epsilon, ATP5PF/subunit F6, ATP5PB/subunit b, ATP5PD/subunit d, ATP5PO/subunit OSCP. ATP synthase complex consists of a soluble F(1) head domain (subunits alpha(3) and beta(3)) - the catalytic core - and a membrane F(0) domain - the membrane proton channel (subunits c, a, 8, e, f, g, k and j). These two domains are linked by a central stalk (subunits gamma, delta, and epsilon) rotating inside the F1 region and a stationary peripheral stalk (subunits F6, b, d, and OSCP).

It is found in the mitochondrion. It localises to the mitochondrion inner membrane. Subunit b, of the mitochondrial membrane ATP synthase complex (F(1)F(0) ATP synthase or Complex V) that produces ATP from ADP in the presence of a proton gradient across the membrane which is generated by electron transport complexes of the respiratory chain. ATP synthase complex consist of a soluble F(1) head domain - the catalytic core - and a membrane F(1) domain - the membrane proton channel. These two domains are linked by a central stalk rotating inside the F(1) region and a stationary peripheral stalk. During catalysis, ATP synthesis in the catalytic domain of F(1) is coupled via a rotary mechanism of the central stalk subunits to proton translocation. In vivo, can only synthesize ATP although its ATP hydrolase activity can be activated artificially in vitro. Part of the complex F(0) domain. Part of the complex F(0) domain and the peripheric stalk, which acts as a stator to hold the catalytic alpha(3)beta(3) subcomplex and subunit a/ATP6 static relative to the rotary elements. The polypeptide is ATP synthase peripheral stalk subunit b, mitochondrial (Rattus norvegicus (Rat)).